We begin with the raw amino-acid sequence, 159 residues long: Ribosomal RNA large subunit methyltransferase H (159 aa).

S-adenosyl-L-methionine-binding residues include Leu76 and Gly108.

Belongs to the RNA methyltransferase RlmH family. As to quaternary structure, homodimer.

Its subcellular location is the cytoplasm. It carries out the reaction pseudouridine(1915) in 23S rRNA + S-adenosyl-L-methionine = N(3)-methylpseudouridine(1915) in 23S rRNA + S-adenosyl-L-homocysteine + H(+). In terms of biological role, specifically methylates the pseudouridine at position 1915 (m3Psi1915) in 23S rRNA. In Pediococcus pentosaceus (strain ATCC 25745 / CCUG 21536 / LMG 10740 / 183-1w), this protein is Ribosomal RNA large subunit methyltransferase H.